A 79-amino-acid polypeptide reads, in one-letter code: UPF0154 protein Lm4b_01315 (79 aa).

The helical transmembrane segment at 2–22 threads the bilayer; it reads WIYILVGIICLLAGLAGGFFI. Residues 57–66 show a composition bias toward polar residues; the sequence is KINQMMSAMN. Residues 57-79 form a disordered region; sequence KINQMMSAMNKQQEKEKPKKTKK.

The protein belongs to the UPF0154 family.

It localises to the cell membrane. In Listeria monocytogenes serotype 4b (strain CLIP80459), this protein is UPF0154 protein Lm4b_01315.